The sequence spans 256 residues: Thiazole synthase (256 aa).

The Schiff-base intermediate with DXP role is filled by Lys-95. Residues Gly-156, 182 to 183 (AG), and 204 to 205 (NT) contribute to the 1-deoxy-D-xylulose 5-phosphate site.

This sequence belongs to the ThiG family. In terms of assembly, homotetramer. Forms heterodimers with either ThiH or ThiS.

The protein localises to the cytoplasm. The catalysed reaction is [ThiS sulfur-carrier protein]-C-terminal-Gly-aminoethanethioate + 2-iminoacetate + 1-deoxy-D-xylulose 5-phosphate = [ThiS sulfur-carrier protein]-C-terminal Gly-Gly + 2-[(2R,5Z)-2-carboxy-4-methylthiazol-5(2H)-ylidene]ethyl phosphate + 2 H2O + H(+). It functions in the pathway cofactor biosynthesis; thiamine diphosphate biosynthesis. Catalyzes the rearrangement of 1-deoxy-D-xylulose 5-phosphate (DXP) to produce the thiazole phosphate moiety of thiamine. Sulfur is provided by the thiocarboxylate moiety of the carrier protein ThiS. In vitro, sulfur can be provided by H(2)S. This is Thiazole synthase from Escherichia coli O8 (strain IAI1).